The chain runs to 434 residues: 23S rRNA (uracil(1939)-C(5))-methyltransferase RlmD (434 aa).

The TRAM domain occupies 10–68; the sequence is RVTTRQIITVTVNDLDPFGQGVARHQGKALFVSGVLPQEQAEVVLVEDKKQYARAQVKR. Positions 81, 87, 90, and 162 each coordinate [4Fe-4S] cluster. S-adenosyl-L-methionine contacts are provided by Q265, F294, N299, E315, N342, and D363. C389 acts as the Nucleophile in catalysis.

This sequence belongs to the class I-like SAM-binding methyltransferase superfamily. RNA M5U methyltransferase family. RlmD subfamily.

It catalyses the reaction uridine(1939) in 23S rRNA + S-adenosyl-L-methionine = 5-methyluridine(1939) in 23S rRNA + S-adenosyl-L-homocysteine + H(+). Its function is as follows. Catalyzes the formation of 5-methyl-uridine at position 1939 (m5U1939) in 23S rRNA. This Klebsiella pneumoniae (strain 342) protein is 23S rRNA (uracil(1939)-C(5))-methyltransferase RlmD.